The sequence spans 536 residues: Ecdysone receptor (536 aa).

Positions 1 to 114 are modulating; sequence MKTENLIVTT…GPVPRQQEEL (114 aa). A disordered region spans residues 77 to 107; the sequence is SPNSKLDDGNMSVHMGDGLDGKKSSSKKGPV. 2 consecutive NR C4-type zinc fingers follow at residues 115-135 and 151-175; these read CLVC…CEGC and CKFG…LKKC. The nuclear receptor DNA-binding region spans 115 to 187; that stretch reads CLVCGDRASG…VGMRPECVVP (73 aa). Residues 278–514 form the NR LBD domain; the sequence is NQVAVIYKLI…FLEEVWDVGD (237 aa).

Belongs to the nuclear hormone receptor family. NR1 subfamily.

It is found in the nucleus. Its function is as follows. Receptor for ecdysone. Binds to ecdysone response elements (ECRES). In Chironomus tentans (Midge), this protein is Ecdysone receptor (EcR).